Here is a 329-residue protein sequence, read N- to C-terminus: Glycerol-3-phosphate dehydrogenase [NAD(P)+] (329 aa).

4 residues coordinate NADPH: Ser-10, Trp-11, Arg-31, and Lys-105. 3 residues coordinate sn-glycerol 3-phosphate: Lys-105, Gly-134, and Ser-136. Ala-138 is a binding site for NADPH. Positions 189, 242, 252, 253, and 254 each coordinate sn-glycerol 3-phosphate. The Proton acceptor role is filled by Lys-189. Arg-253 is an NADPH binding site. Residues Val-277 and Glu-279 each contribute to the NADPH site.

It belongs to the NAD-dependent glycerol-3-phosphate dehydrogenase family.

The protein resides in the cytoplasm. The catalysed reaction is sn-glycerol 3-phosphate + NAD(+) = dihydroxyacetone phosphate + NADH + H(+). It carries out the reaction sn-glycerol 3-phosphate + NADP(+) = dihydroxyacetone phosphate + NADPH + H(+). Its pathway is membrane lipid metabolism; glycerophospholipid metabolism. Its function is as follows. Catalyzes the reduction of the glycolytic intermediate dihydroxyacetone phosphate (DHAP) to sn-glycerol 3-phosphate (G3P), the key precursor for phospholipid synthesis. In Neisseria meningitidis serogroup A / serotype 4A (strain DSM 15465 / Z2491), this protein is Glycerol-3-phosphate dehydrogenase [NAD(P)+].